We begin with the raw amino-acid sequence, 149 residues long: MRAVVQRVAEASVTVNGEETGRIGKGVLVFLGVGPDDGSGDIRYLSEKIVNLRIFPDASDKMNLSVREVGGGVLVISQFTLFGDCRKGRRPSYAGAAPPELARRLYGEFVEELKKQAVPVATGMFQEMMRVHLVNDGPVTLLLDSRKVF.

The short motif at 137-138 (GP) is the Gly-cisPro motif, important for rejection of L-amino acids element.

This sequence belongs to the DTD family. In terms of assembly, homodimer.

The protein resides in the cytoplasm. The enzyme catalyses glycyl-tRNA(Ala) + H2O = tRNA(Ala) + glycine + H(+). The catalysed reaction is a D-aminoacyl-tRNA + H2O = a tRNA + a D-alpha-amino acid + H(+). Its function is as follows. An aminoacyl-tRNA editing enzyme that deacylates mischarged D-aminoacyl-tRNAs. Also deacylates mischarged glycyl-tRNA(Ala), protecting cells against glycine mischarging by AlaRS. Acts via tRNA-based rather than protein-based catalysis; rejects L-amino acids rather than detecting D-amino acids in the active site. By recycling D-aminoacyl-tRNA to D-amino acids and free tRNA molecules, this enzyme counteracts the toxicity associated with the formation of D-aminoacyl-tRNA entities in vivo and helps enforce protein L-homochirality. The protein is D-aminoacyl-tRNA deacylase of Syntrophobacter fumaroxidans (strain DSM 10017 / MPOB).